The primary structure comprises 215 residues: UPF0502 protein Ping_1905 (215 aa).

This sequence belongs to the UPF0502 family.

In Psychromonas ingrahamii (strain DSM 17664 / CCUG 51855 / 37), this protein is UPF0502 protein Ping_1905.